Here is a 269-residue protein sequence, read N- to C-terminus: Cytochrome c oxidase subunit 3 (269 aa).

7 consecutive transmembrane segments (helical) span residues 24–44 (LFTSISLFILTTATVLFMHGF), 46–66 (GFQYLVPVAVINVMYVMGLWF), 90–110 (GVGLFIISEVFFFLAIFWAFF), 138–160 (PLLNTIILLSSGVTITYAHHSLI), 167–187 (ALYGTVVTILLAIVFTFFQGV), 207–227 (FGTGFHGLHVIIGTAFLAVGL), and 247–267 (ILYWHFVDVVWLFLYISVYYW).

This sequence belongs to the cytochrome c oxidase subunit 3 family. In terms of assembly, component of the cytochrome c oxidase (complex IV, CIV), a multisubunit enzyme composed of a catalytic core of 3 subunits and several supernumerary subunits. The complex exists as a monomer or a dimer and forms supercomplexes (SCs) in the inner mitochondrial membrane with ubiquinol-cytochrome c oxidoreductase (cytochrome b-c1 complex, complex III, CIII).

It localises to the mitochondrion inner membrane. It catalyses the reaction 4 Fe(II)-[cytochrome c] + O2 + 8 H(+)(in) = 4 Fe(III)-[cytochrome c] + 2 H2O + 4 H(+)(out). Its function is as follows. Component of the cytochrome c oxidase, the last enzyme in the mitochondrial electron transport chain which drives oxidative phosphorylation. The respiratory chain contains 3 multisubunit complexes succinate dehydrogenase (complex II, CII), ubiquinol-cytochrome c oxidoreductase (cytochrome b-c1 complex, complex III, CIII) and cytochrome c oxidase (complex IV, CIV), that cooperate to transfer electrons derived from NADH and succinate to molecular oxygen, creating an electrochemical gradient over the inner membrane that drives transmembrane transport and the ATP synthase. Cytochrome c oxidase is the component of the respiratory chain that catalyzes the reduction of oxygen to water. Electrons originating from reduced cytochrome c in the intermembrane space (IMS) are transferred via the dinuclear copper A center (CU(A)) of subunit 2 and heme A of subunit 1 to the active site in subunit 1, a binuclear center (BNC) formed by heme A3 and copper B (CU(B)). The BNC reduces molecular oxygen to 2 water molecules using 4 electrons from cytochrome c in the IMS and 4 protons from the mitochondrial matrix. The sequence is that of Cytochrome c oxidase subunit 3 (cox3) from Emericella nidulans (Aspergillus nidulans).